We begin with the raw amino-acid sequence, 430 residues long: Serine hydroxymethyltransferase (430 aa).

(6S)-5,6,7,8-tetrahydrofolate is bound by residues leucine 123 and 127–129; that span reads GHL. Lysine 232 carries the post-translational modification N6-(pyridoxal phosphate)lysine. Residue glutamate 248 coordinates (6S)-5,6,7,8-tetrahydrofolate.

The protein belongs to the SHMT family. In terms of assembly, homodimer. It depends on pyridoxal 5'-phosphate as a cofactor.

The protein resides in the cytoplasm. The enzyme catalyses (6R)-5,10-methylene-5,6,7,8-tetrahydrofolate + glycine + H2O = (6S)-5,6,7,8-tetrahydrofolate + L-serine. It functions in the pathway one-carbon metabolism; tetrahydrofolate interconversion. It participates in amino-acid biosynthesis; glycine biosynthesis; glycine from L-serine: step 1/1. Its function is as follows. Catalyzes the reversible interconversion of serine and glycine with tetrahydrofolate (THF) serving as the one-carbon carrier. This reaction serves as the major source of one-carbon groups required for the biosynthesis of purines, thymidylate, methionine, and other important biomolecules. Also exhibits THF-independent aldolase activity toward beta-hydroxyamino acids, producing glycine and aldehydes, via a retro-aldol mechanism. The sequence is that of Serine hydroxymethyltransferase from Anaplasma marginale (strain Florida).